The primary structure comprises 139 residues: ATP synthase epsilon chain (139 aa).

It belongs to the ATPase epsilon chain family. F-type ATPases have 2 components, CF(1) - the catalytic core - and CF(0) - the membrane proton channel. CF(1) has five subunits: alpha(3), beta(3), gamma(1), delta(1), epsilon(1). CF(0) has three main subunits: a, b and c.

It localises to the cell inner membrane. Produces ATP from ADP in the presence of a proton gradient across the membrane. In Enterobacter sp. (strain 638), this protein is ATP synthase epsilon chain.